The sequence spans 481 residues: Trichosetin biosynthesis cluster MFS transporter (481 aa).

The segment covering 1 to 13 (MSTTPQMSQSGFQ) has biased composition (polar residues). A disordered region spans residues 1–63 (MSTTPQMSQS…DGPDDPQHPL (63 aa)). Residues 20-31 (GAREDVGTEAQE) show a composition bias toward basic and acidic residues. Asn64 is a glycosylation site (N-linked (GlcNAc...) asparagine). A helical transmembrane segment spans residues 72–92 (LHVGIVSLSTLAANLAATMFA). Asn103 carries N-linked (GlcNAc...) asparagine glycosylation. 5 helical membrane-spanning segments follow: residues 111 to 131 (AMTVSLYVLGFALGPLLLAPL), 147 to 167 (VYMAFTIGCAFSTNVAMFLVF), 169 to 189 (IIAGCAASGPMSIGGGTVADL), 200 to 220 (ALFAVGPLLGPVIGPIIGGFV), and 228 to 248 (WTFRILLILSGILATVTFALM). The N-linked (GlcNAc...) asparagine glycan is linked to Asn252. A run of 5 helical transmembrane segments spans residues 302-322 (PIVLLVSLYTGILFGLIFLLF), 353-373 (LLLMKWLGPITPLGLFIYGWT), 380-400 (WIVPIIGTFIVGFGSLFVVIP), 403-423 (IYLVDAFGAEAAASAMAANLL), and 446-466 (GWGNSVLGFITLAFTPVPWIF).

This sequence belongs to the major facilitator superfamily.

Its subcellular location is the cell membrane. In terms of biological role, efflux pump required for efficient secretion of trichosetin or other secondary metabolies produced by the trichosetin gene cluster. Plays a crucial role in detoxification of the toxic trichosetin in Gibberella fujikuroi cells. This is Trichosetin biosynthesis cluster MFS transporter from Gibberella fujikuroi (strain CBS 195.34 / IMI 58289 / NRRL A-6831) (Bakanae and foot rot disease fungus).